Here is a 643-residue protein sequence, read N- to C-terminus: Threonine--tRNA ligase (643 aa).

The TGS domain occupies 1–61 (MPIITLPDGS…SEDSSLEIIT (61 aa)). A catalytic region spans residues 243 to 534 (DHRRIGKALD…ITEEYAGFFP (292 aa)). The Zn(2+) site is built by Cys334, His385, and His511.

Belongs to the class-II aminoacyl-tRNA synthetase family. Homodimer. Zn(2+) is required as a cofactor.

It is found in the cytoplasm. It carries out the reaction tRNA(Thr) + L-threonine + ATP = L-threonyl-tRNA(Thr) + AMP + diphosphate + H(+). In terms of biological role, catalyzes the attachment of threonine to tRNA(Thr) in a two-step reaction: L-threonine is first activated by ATP to form Thr-AMP and then transferred to the acceptor end of tRNA(Thr). Also edits incorrectly charged L-seryl-tRNA(Thr). This is Threonine--tRNA ligase from Actinobacillus pleuropneumoniae serotype 7 (strain AP76).